A 903-amino-acid polypeptide reads, in one-letter code: DNA transposase THAP9 (903 aa).

A THAP-type zinc finger spans residues 1–89 (MTRSCSAVGC…LKKGAVPSVS (89 aa)). Residues 123 to 126 (DHNY) carry the HCFC1-binding motif (HBM) motif.

In terms of biological role, active transposase that specifically recognizes the bipartite 5'-TXXGGGX(A/T)-3' consensus motif and mediates transposition. In Homo sapiens (Human), this protein is DNA transposase THAP9 (THAP9).